Reading from the N-terminus, the 264-residue chain is Anamorsin homolog 2 (264 aa).

The N-terminal SAM-like domain stretch occupies residues 1 to 142; it reads MAATAAALAV…KVSWSMGSSF (142 aa). Positions 143–174 are linker; it reads PLKKATKGLPKIQIDDDSELIDEDSLLTEDDL. Residues cysteine 185, cysteine 194, cysteine 197, and cysteine 199 each coordinate [2Fe-2S] cluster. A fe-S binding site A region spans residues 185 to 199; it reads CEVGATRKACKNCTC. Cysteine 225, cysteine 228, cysteine 236, and cysteine 239 together coordinate [4Fe-4S] cluster. 2 consecutive short sequence motifs (cx2C motif) follow at residues 225-228 and 236-239; these read CGNC and CGTC. Residues 225-239 are fe-S binding site B; sequence CGNCGLGDAFRCGTC.

The protein belongs to the anamorsin family. Monomer. It depends on [2Fe-2S] cluster as a cofactor. [4Fe-4S] cluster is required as a cofactor.

The protein localises to the cytoplasm. Its subcellular location is the mitochondrion intermembrane space. In terms of biological role, component of the cytosolic iron-sulfur (Fe-S) protein assembly (CIA) machinery. Required for the maturation of extramitochondrial Fe-S proteins. Part of an electron transfer chain functioning in an early step of cytosolic Fe-S biogenesis, facilitating the de novo assembly of a [4Fe-4S] cluster on the cytosolic Fe-S scaffold complex. Electrons are transferred from NADPH via a FAD- and FMN-containing diflavin oxidoreductase. Together with the diflavin oxidoreductase, also required for the assembly of the diferric tyrosyl radical cofactor of ribonucleotide reductase (RNR), probably by providing electrons for reduction during radical cofactor maturation in the catalytic small subunit. This is Anamorsin homolog 2 from Oryza sativa subsp. japonica (Rice).